Here is a 179-residue protein sequence, read N- to C-terminus: Large ribosomal subunit protein uL6 (179 aa).

This sequence belongs to the universal ribosomal protein uL6 family. As to quaternary structure, part of the 50S ribosomal subunit.

Functionally, this protein binds to the 23S rRNA, and is important in its secondary structure. It is located near the subunit interface in the base of the L7/L12 stalk, and near the tRNA binding site of the peptidyltransferase center. This Syntrophotalea carbinolica (strain DSM 2380 / NBRC 103641 / GraBd1) (Pelobacter carbinolicus) protein is Large ribosomal subunit protein uL6.